The sequence spans 161 residues: MVSAVYPGTFDPMTRGHEDLVRRASNIFDELVVGVAHSPNKRPFFSLEERISIAREVLGHYPNVRVEGFSGLLKDFVRKNNARVIVRGLRAVSDFEYEFQMAGMNRYLLPDVETMFLTPSDQYQFISGTFVREIAVLGGDVSKFVFPSVERWLQEKIAKPE.

T9 contributes to the substrate binding site. Residues 9–10 and H17 each bind ATP; that span reads TF. Substrate-binding residues include K41, L73, and R87. ATP contacts are provided by residues 88 to 90, E98, and 123 to 129; these read GLR and YQFISGT.

Belongs to the bacterial CoaD family. In terms of assembly, homohexamer. Mg(2+) is required as a cofactor.

The protein localises to the cytoplasm. The catalysed reaction is (R)-4'-phosphopantetheine + ATP + H(+) = 3'-dephospho-CoA + diphosphate. The protein operates within cofactor biosynthesis; coenzyme A biosynthesis; CoA from (R)-pantothenate: step 4/5. In terms of biological role, reversibly transfers an adenylyl group from ATP to 4'-phosphopantetheine, yielding dephospho-CoA (dPCoA) and pyrophosphate. The polypeptide is Phosphopantetheine adenylyltransferase (Cupriavidus taiwanensis (strain DSM 17343 / BCRC 17206 / CCUG 44338 / CIP 107171 / LMG 19424 / R1) (Ralstonia taiwanensis (strain LMG 19424))).